The sequence spans 179 residues: Putative 5'(3')-deoxyribonucleotidase (179 aa).

The active-site Nucleophile is the aspartate 9. Residues aspartate 9, aspartate 11, and aspartate 135 each contribute to the Mg(2+) site. The active-site Proton donor is aspartate 11.

This sequence belongs to the 5'(3')-deoxyribonucleotidase family. The cofactor is Mg(2+).

Dephosphorylates the 5' and 2'(3')-phosphates of deoxyribonucleotides. This chain is Putative 5'(3')-deoxyribonucleotidase, found in Staphylococcus epidermidis (strain ATCC 12228 / FDA PCI 1200).